A 467-amino-acid chain; its full sequence is UDP-N-acetylmuramate--L-alanine ligase (467 aa).

114–120 provides a ligand contact to ATP; sequence GTHGKTT.

The protein belongs to the MurCDEF family.

It localises to the cytoplasm. The catalysed reaction is UDP-N-acetyl-alpha-D-muramate + L-alanine + ATP = UDP-N-acetyl-alpha-D-muramoyl-L-alanine + ADP + phosphate + H(+). It functions in the pathway cell wall biogenesis; peptidoglycan biosynthesis. In terms of biological role, cell wall formation. In Rhodopseudomonas palustris (strain BisA53), this protein is UDP-N-acetylmuramate--L-alanine ligase.